A 491-amino-acid chain; its full sequence is 23S rRNA (uracil(1939)-C(5))-methyltransferase RlmD (491 aa).

Basic and acidic residues predominate over residues 1–10 (MSDPTEHPEI). The disordered stretch occupies residues 1 to 28 (MSDPTEHPEILQDPSSSAPVQGRTDLPP). A TRAM domain is found at 18-81 (APVQGRTDLP…NNWEQASLTA (64 aa)). Residues Cys94, Cys104, Cys107, and Cys186 each contribute to the [4Fe-4S] cluster site. Residues Gln294, Phe323, Asn328, Glu344, Asn379, and Asp400 each coordinate S-adenosyl-L-methionine. Residue Cys447 is the Nucleophile of the active site.

This sequence belongs to the class I-like SAM-binding methyltransferase superfamily. RNA M5U methyltransferase family. RlmD subfamily.

It carries out the reaction uridine(1939) in 23S rRNA + S-adenosyl-L-methionine = 5-methyluridine(1939) in 23S rRNA + S-adenosyl-L-homocysteine + H(+). Functionally, catalyzes the formation of 5-methyl-uridine at position 1939 (m5U1939) in 23S rRNA. In Paracidovorax citrulli (strain AAC00-1) (Acidovorax citrulli), this protein is 23S rRNA (uracil(1939)-C(5))-methyltransferase RlmD.